Reading from the N-terminus, the 220-residue chain is Protein-L-isoaspartate O-methyltransferase (220 aa).

Residue S67 is part of the active site.

The protein belongs to the methyltransferase superfamily. L-isoaspartyl/D-aspartyl protein methyltransferase family.

The protein resides in the cytoplasm. It carries out the reaction [protein]-L-isoaspartate + S-adenosyl-L-methionine = [protein]-L-isoaspartate alpha-methyl ester + S-adenosyl-L-homocysteine. Its function is as follows. Catalyzes the methyl esterification of L-isoaspartyl residues in peptides and proteins that result from spontaneous decomposition of normal L-aspartyl and L-asparaginyl residues. It plays a role in the repair and/or degradation of damaged proteins. The polypeptide is Protein-L-isoaspartate O-methyltransferase (Chlorobium phaeobacteroides (strain BS1)).